The chain runs to 333 residues: UDP-3-O-acylglucosamine N-acyltransferase 2 (333 aa).

The Proton acceptor role is filled by H243.

Belongs to the transferase hexapeptide repeat family. LpxD subfamily. Homotrimer.

It catalyses the reaction a UDP-3-O-[(3R)-3-hydroxyacyl]-alpha-D-glucosamine + a (3R)-hydroxyacyl-[ACP] = a UDP-2-N,3-O-bis[(3R)-3-hydroxyacyl]-alpha-D-glucosamine + holo-[ACP] + H(+). It participates in bacterial outer membrane biogenesis; LPS lipid A biosynthesis. Catalyzes the N-acylation of UDP-3-O-acylglucosamine using 3-hydroxyacyl-ACP as the acyl donor. Is involved in the biosynthesis of lipid A, a phosphorylated glycolipid that anchors the lipopolysaccharide to the outer membrane of the cell. The chain is UDP-3-O-acylglucosamine N-acyltransferase 2 from Koribacter versatilis (strain Ellin345).